A 685-amino-acid chain; its full sequence is MSCQISCKSRRGGGGGGGGGFRGFSSGSAVVSGGSRRSTSGFSCLSRHGGGRGGSGGGGFGSQSLVGLGGYKSISSSVAGYGGGFGGRSYGGFGGGSGFGGSGGFGGGSGFGGGRGFGGGSGFGGGSGFGGGSGFGGGSGFGGGGFGGGRFGGGPGGFGGPGGFPGGGIHEVSVNQSLLQPLDVKVDPEIQNVKSQEREQIKTLNNKFASFIDTVRFLEQQNQVLHTKWELLQQLDVGTRTTNLDPVFQAYIGILKKQVDRLTAERNSQDSELNNMQDLVEDFKKKYEDEINKRTSAENDFVTIKKDVDSCYMDKTELQAKMEMLTQEVDFLRTLYDTELSQLQQNVTDTNVILSMDNNRNLDLDSIIAEVQSQYEIIAHKSKAESEELYHSKANEELQVTAVKHGDSLKEIKMEISELNRTIQRLQGEISHVKKQCKGVQDSIADAEQRGEHAIKDARGKLTDLEEALQQGRENLARLLRDYQELMNVKLALDVEIATYRKLLEGEECRMSGDFSDNVSVSVTSSTISSSVASKAGFGSGGQSSGGRGSYGGRGGGSTYGSGGRSSGVRGSGSGSGGGGYSSGGGSRGGSGGGGYSTGGGSRGGSSSGGGGYSSGGGSRGDSSSGGGSRGGSGGGSRGGSGGGGYSSGGGSRGGSSSGGAVSGSERGGSGSGEGCGSGVTFSFR.

Residues 1–20 (MSCQISCKSRRGGGGGGGGG) are disordered. The head stretch occupies residues 1-196 (MSCQISCKSR…DPEIQNVKSQ (196 aa)). Position 22 is an asymmetric dimethylarginine (arginine 22). Phosphoserine is present on residues serine 25 and serine 28. Arginine 52 is subject to Omega-N-methylarginine. Position 64 is a phosphoserine (serine 64). The tract at residues 197–232 (EREQIKTLNNKFASFIDTVRFLEQQNQVLHTKWELL) is coil 1A. One can recognise an IF rod domain in the interval 197 to 511 (EREQIKTLNN…KLLEGEECRM (315 aa)). The tract at residues 233–251 (QQLDVGTRTTNLDPVFQAY) is linker 1. The interval 252 to 343 (IGILKKQVDR…TLYDTELSQL (92 aa)) is coil 1B. The tract at residues 344–367 (QQNVTDTNVILSMDNNRNLDLDSI) is linker 12. A coil 2 region spans residues 368 to 507 (IAEVQSQYEI…ATYRKLLEGE (140 aa)). A tail region spans residues 508 to 685 (ECRMSGDFSD…CGSGVTFSFR (178 aa)). Residues 532 to 685 (VASKAGFGSG…CGSGVTFSFR (154 aa)) are disordered. Residues 538–678 (FGSGGQSSGG…GSGSGEGCGS (141 aa)) show a composition bias toward gly residues. Omega-N-methylarginine occurs at positions 554, 588, 603, and 653.

Belongs to the intermediate filament family. In terms of assembly, heterotetramer of two type I and two type II keratins. Associates with KRT10.

The protein resides in the cytoplasm. In terms of biological role, probably contributes to terminal cornification. Associated with keratinocyte activation, proliferation and keratinization. Required for maintenance of corneocytes and keratin filaments in suprabasal keratinocytes in the epidermis of the ear, potentially via moderation of expression and localization of keratins and their partner proteins. Plays a role in the establishment of the epidermal barrier on plantar skin. This is Keratin, type II cytoskeletal 2 epidermal from Rattus norvegicus (Rat).